The chain runs to 364 residues: Histidinol-phosphate aminotransferase 1 (364 aa).

Position 211 is an N6-(pyridoxal phosphate)lysine (K211).

It belongs to the class-II pyridoxal-phosphate-dependent aminotransferase family. Histidinol-phosphate aminotransferase subfamily. As to quaternary structure, homodimer. The cofactor is pyridoxal 5'-phosphate.

The catalysed reaction is L-histidinol phosphate + 2-oxoglutarate = 3-(imidazol-4-yl)-2-oxopropyl phosphate + L-glutamate. The protein operates within amino-acid biosynthesis; L-histidine biosynthesis; L-histidine from 5-phospho-alpha-D-ribose 1-diphosphate: step 7/9. The chain is Histidinol-phosphate aminotransferase 1 from Legionella pneumophila (strain Paris).